An 887-amino-acid chain; its full sequence is Alanine--tRNA ligase (887 aa).

Zn(2+) contacts are provided by H581, H585, C683, and H687.

The protein belongs to the class-II aminoacyl-tRNA synthetase family. It depends on Zn(2+) as a cofactor.

It localises to the cytoplasm. It carries out the reaction tRNA(Ala) + L-alanine + ATP = L-alanyl-tRNA(Ala) + AMP + diphosphate. Functionally, catalyzes the attachment of alanine to tRNA(Ala) in a two-step reaction: alanine is first activated by ATP to form Ala-AMP and then transferred to the acceptor end of tRNA(Ala). Also edits incorrectly charged Ser-tRNA(Ala) and Gly-tRNA(Ala) via its editing domain. In Ehrlichia canis (strain Jake), this protein is Alanine--tRNA ligase.